Here is a 696-residue protein sequence, read N- to C-terminus: MADQVQDVHPMEWGPGKTPQGRARLPSSFDATVKDPVAAVHSENLVCRVPMHRIRHLESLVYDLMQNSSANVNQEQVGVTPSPGDQPHVPDYPTPSAAHAPSTNQEPASAAVSPADYGSMQSTGGGANYVGSAHWAAVLDGIAELKDHLDNEESHHSDSQGVDPPCLQVTGPQLLYGCPKPADKDEILSSIPARSVVDRLVSRYFNSFEMSPAVLHSVQFLKEYEEFWEDPQTTSPIWLGLLFTIMCLATQFEKSRLDPGVQSPAVLSMERELQEMVDTFRLRIPQCLVLGSYAKGGPFVLETLMLYIAAEIFLSNDAEIEIWILMGNTVQLALHMGYHRDPKHFKGLSPFTAEMRRRIWATIVEMDLGLSAQMGLPRMIKHWQTDTQEPSNFQDSDFDSATVEMPPSRLNTDLTPILYRLVKARLMTTIGYIWDFSADVRPYPYTEVQKMDDKLDQARKSIPECLKWHSMARNITDSPQHIMQKVILETVFYRAKIVLHRKYMFLPLAQSASSRRIVLESALKLLDYQHMLQEETQPFCQLYQERWRVSSLVNHDFLLATSILCYYLQHARGATPQLSESASFDETIMTSLSRSHDIWLQSSNSSKEARKVVRALAVILGRVNTPSADAAGESGLVFGLQSTYPPSTTNDYSQAPMITPTAEWQEMDGQSQWLPGPRVIQRLTYDMQRQQMRWGL.

Disordered regions lie at residues 1 to 24 and 73 to 117; these read MADQVQDVHPMEWGPGKTPQGRAR and NQEQ…PADY.

It is found in the nucleus. Its function is as follows. Transcription factor that regulates the expression of the gene cluster that mediates the biosynthesis of Equisetin. The sequence is that of Equisetin cluster transcription factor eqxF from Fusarium heterosporum.